A 267-amino-acid chain; its full sequence is Integral membrane protein 2C (267 aa).

A Phosphothreonine modification is found at Thr37. The chain crosses the membrane as a helical; Signal-anchor for type II membrane protein span at residues 55–75 (VGGVCYLSMGMVVLLMGLVFA). One can recognise a BRICHOS domain in the interval 136–230 (FGGGDPADII…LCNGKDTYRL (95 aa)). A disulfide bond links Cys163 and Cys222. N-linked (GlcNAc...) asparagine glycosylation is present at Asn169.

It belongs to the ITM2 family. In terms of assembly, interacts with BACE1. Interacts with APP. Interacts with STMN2. Post-translationally, type I membrane-bound, as well as soluble, furin has a pre-eminent role in ITM2C proteolytic processing. PCSK7 and PCSK5 may also be involved although to a lesser extent. The soluble form of PCSK7 is incapable of processing ITM2C. Fails to undergo shedding by ADAM10 and intramembrane cleavage by SPPL2B.

The protein localises to the lysosome membrane. It localises to the cell membrane. In terms of biological role, negative regulator of amyloid-beta peptide production. May inhibit the processing of APP by blocking its access to alpha- and beta-secretase. Binding to the beta-secretase-cleaved APP C-terminal fragment is negligible, suggesting that ITM2C is a poor gamma-secretase cleavage inhibitor. May play a role in TNF-induced cell death and neuronal differentiation. The sequence is that of Integral membrane protein 2C (ITM2C) from Pongo abelii (Sumatran orangutan).